The following is a 153-amino-acid chain: ATP synthase subunit b' (153 aa).

Residues 20–40 (TLPLMAAQVVLLTFILNALFF) traverse the membrane as a helical segment.

The protein belongs to the ATPase B chain family. In terms of assembly, F-type ATPases have 2 components, F(1) - the catalytic core - and F(0) - the membrane proton channel. F(1) has five subunits: alpha(3), beta(3), gamma(1), delta(1), epsilon(1). F(0) has four main subunits: a(1), b(1), b'(1) and c(10-14). The alpha and beta chains form an alternating ring which encloses part of the gamma chain. F(1) is attached to F(0) by a central stalk formed by the gamma and epsilon chains, while a peripheral stalk is formed by the delta, b and b' chains.

The protein localises to the cellular thylakoid membrane. Functionally, f(1)F(0) ATP synthase produces ATP from ADP in the presence of a proton or sodium gradient. F-type ATPases consist of two structural domains, F(1) containing the extramembraneous catalytic core and F(0) containing the membrane proton channel, linked together by a central stalk and a peripheral stalk. During catalysis, ATP synthesis in the catalytic domain of F(1) is coupled via a rotary mechanism of the central stalk subunits to proton translocation. Its function is as follows. Component of the F(0) channel, it forms part of the peripheral stalk, linking F(1) to F(0). The b'-subunit is a diverged and duplicated form of b found in plants and photosynthetic bacteria. This Prochlorococcus marinus (strain SARG / CCMP1375 / SS120) protein is ATP synthase subunit b'.